Here is a 749-residue protein sequence, read N- to C-terminus: Protein phosphatase 1E (749 aa).

The segment at glutamate 21–leucine 128 is disordered. A run of 3 repeats spans residues proline 31–glutamate 32, proline 33–glutamate 34, and proline 35–glutamate 36. The 7 X 2 AA tandem repeats of P-E stretch occupies residues proline 31–glutamate 44. Residues proline 31–alanine 45 are compositionally biased toward acidic residues. The 4; approximate repeat unit spans residues serine 37–glutamate 38. 3 repeat units span residues proline 39–glutamate 40, proline 41–glutamate 42, and proline 43–glutamate 44. Over residues glutamate 46 to alanine 55 the composition is skewed to low complexity. Acidic residues predominate over residues alanine 69–alanine 102. A compositionally biased stretch (pro residues) spans valine 110–arginine 126. Residues glutamine 224–leucine 485 enclose the PPM-type phosphatase domain. Residues aspartate 270, glycine 271, aspartate 432, and aspartate 476 each coordinate Mn(2+). The interval serine 495–leucine 537 is disordered. Over residues aspartate 515–arginine 524 the composition is skewed to basic and acidic residues. Serine 532 and serine 545 each carry phosphoserine. The interval valine 608 to leucine 627 is disordered.

This sequence belongs to the PP2C family. In terms of assembly, heterotrimer. Interacts with PAX1 and ARHGEF6 (or ARHGEF7). Mg(2+) is required as a cofactor. The cofactor is Mn(2+).

The protein localises to the nucleus. Its subcellular location is the cytoplasm. It catalyses the reaction O-phospho-L-seryl-[protein] + H2O = L-seryl-[protein] + phosphate. The enzyme catalyses O-phospho-L-threonyl-[protein] + H2O = L-threonyl-[protein] + phosphate. In terms of biological role, protein phosphatase that inactivates multifunctional CaM kinases such as CAMK4 and CAMK2. Dephosphorylates and inactivates PAK. May play a role in the inhibition of actin fiber stress breakdown and in morphological changes driven by TNK2/CDC42. Dephosphorylates PRKAA2. The chain is Protein phosphatase 1E (Ppm1e) from Mus musculus (Mouse).